The sequence spans 101 residues: Large ribosomal subunit protein bL21 (101 aa).

This sequence belongs to the bacterial ribosomal protein bL21 family. As to quaternary structure, part of the 50S ribosomal subunit. Contacts protein L20.

Functionally, this protein binds to 23S rRNA in the presence of protein L20. This is Large ribosomal subunit protein bL21 from Corynebacterium glutamicum (strain R).